Here is a 311-residue protein sequence, read N- to C-terminus: Pyrimidine-specific ribonucleoside hydrolase RihA (311 aa).

His240 is an active-site residue.

Belongs to the IUNH family. RihA subfamily.

In terms of biological role, hydrolyzes with equal efficiency cytidine or uridine to ribose and cytosine or uracil, respectively. The protein is Pyrimidine-specific ribonucleoside hydrolase RihA of Escherichia coli O8 (strain IAI1).